A 153-amino-acid chain; its full sequence is SsrA-binding protein (153 aa).

Belongs to the SmpB family.

It is found in the cytoplasm. Required for rescue of stalled ribosomes mediated by trans-translation. Binds to transfer-messenger RNA (tmRNA), required for stable association of tmRNA with ribosomes. tmRNA and SmpB together mimic tRNA shape, replacing the anticodon stem-loop with SmpB. tmRNA is encoded by the ssrA gene; the 2 termini fold to resemble tRNA(Ala) and it encodes a 'tag peptide', a short internal open reading frame. During trans-translation Ala-aminoacylated tmRNA acts like a tRNA, entering the A-site of stalled ribosomes, displacing the stalled mRNA. The ribosome then switches to translate the ORF on the tmRNA; the nascent peptide is terminated with the 'tag peptide' encoded by the tmRNA and targeted for degradation. The ribosome is freed to recommence translation, which seems to be the essential function of trans-translation. This is SsrA-binding protein from Orientia tsutsugamushi (strain Boryong) (Rickettsia tsutsugamushi).